A 281-amino-acid polypeptide reads, in one-letter code: tRNA dimethylallyltransferase (281 aa).

Interaction with substrate tRNA regions lie at residues 13–16 and 133–137; these read DSAQ and QRITR.

The protein belongs to the IPP transferase family. In terms of assembly, monomer. It depends on Mg(2+) as a cofactor.

It carries out the reaction adenosine(37) in tRNA + dimethylallyl diphosphate = N(6)-dimethylallyladenosine(37) in tRNA + diphosphate. Catalyzes the transfer of a dimethylallyl group onto the adenine at position 37 in tRNAs that read codons beginning with uridine, leading to the formation of N6-(dimethylallyl)adenosine (i(6)A). In Novosphingobium aromaticivorans (strain ATCC 700278 / DSM 12444 / CCUG 56034 / CIP 105152 / NBRC 16084 / F199), this protein is tRNA dimethylallyltransferase.